A 243-amino-acid chain; its full sequence is MRTRVIVNGANGKMGILACETLENHEQFEVVAKLSRQDNLGQSILDTKAQIVVDLTRADCVYENSLTIINHGARPVIGTSGLVETQINELTKLCEIKQIGGIIAPNFSLGAILMMMLATKASEYFSEVEIIEGHHQQKLDAPSGTALKTAEMIAAARKKPKNKLPLKELTPGARGGSHHDINIHSLRLPGLLARQEVLFGNIGETLSITHNSIDRRCFMPGIVLACQKVLNLTNLVYGLEHLL.

Residues 9–14 (GANGKM), 78–80 (GTS), and 104–107 (APNF) each bind NAD(+). The active-site Proton donor/acceptor is the histidine 134. (S)-2,3,4,5-tetrahydrodipicolinate is bound at residue histidine 135. Lysine 138 acts as the Proton donor in catalysis. Residue 144-145 (GT) participates in (S)-2,3,4,5-tetrahydrodipicolinate binding.

This sequence belongs to the DapB family.

The protein resides in the cytoplasm. The enzyme catalyses (S)-2,3,4,5-tetrahydrodipicolinate + NAD(+) + H2O = (2S,4S)-4-hydroxy-2,3,4,5-tetrahydrodipicolinate + NADH + H(+). The catalysed reaction is (S)-2,3,4,5-tetrahydrodipicolinate + NADP(+) + H2O = (2S,4S)-4-hydroxy-2,3,4,5-tetrahydrodipicolinate + NADPH + H(+). It participates in amino-acid biosynthesis; L-lysine biosynthesis via DAP pathway; (S)-tetrahydrodipicolinate from L-aspartate: step 4/4. Its function is as follows. Catalyzes the conversion of 4-hydroxy-tetrahydrodipicolinate (HTPA) to tetrahydrodipicolinate. The polypeptide is 4-hydroxy-tetrahydrodipicolinate reductase (Legionella pneumophila (strain Paris)).